We begin with the raw amino-acid sequence, 795 residues long: TBC1 domain family member 5 (795 aa).

The span at 1–13 shows a compositional bias: basic and acidic residues; sequence MYHSLSETRHPLQ. The tract at residues 1-49 is disordered; that stretch reads MYHSLSETRHPLQPEEQEVGIDPLSSYSNKSGGDSNKNGRRTSSTLDSE. A compositionally biased stretch (polar residues) spans 25–49; the sequence is SSYSNKSGGDSNKNGRRTSSTLDSE. Thr-42 carries the post-translational modification Phosphothreonine. Ser-43 and Ser-44 each carry phosphoserine. The segment at 56–64 is required for interaction with retromer; involved in interaction with ATG8 family proteins; sequence RKEWEELFV. Positions 57 to 62 match the LIR 1 motif; the sequence is KEWEEL. The region spanning 81-359 is the Rab-GAP TBC domain; it reads LRSSRFRSIC…VVWDALFADG (279 aa). Ser-460 carries the post-translational modification Phosphoserine. Residues 475–564 are disordered; sequence PGSAGGPVPG…PPSSATKKDS (90 aa). Low complexity predominate over residues 484-496; that stretch reads GGNSSSSSSVVIP. Residues Ser-522, Ser-539, Ser-541, Ser-544, Ser-554, Ser-570, Ser-584, and Ser-730 each carry the phosphoserine modification. The span at 523–542 shows a compositional bias: polar residues; sequence MPVQLNKGLSSKNISSSPSV. Positions 554 to 564 are enriched in polar residues; sequence SPPSSATKKDS. The tract at residues 674–795 is disordered; it reads HYCSSGQGQG…GFTIVSPLDI (122 aa). Residues 727–748 are compositionally biased toward polar residues; sequence ARGSFSGQAQPLRTLRSTSGKS. Residues 765 to 776 are compositionally biased toward low complexity; it reads PASASSSNPSSS. The short motif at 785 to 789 is the LIR 2 element; the sequence is SGFTI. The segment at 786–791 is required for interaction with ATG8 family proteins; the sequence is GFTIVS. Position 791 is a phosphoserine (Ser-791).

In terms of assembly, interacts with MAP1LC3A, MAP1LC3B, MAP1LC3C, GABARAP, GABARAPL1, GABARAPL2. Interacts with VPS29 and VPS35; indicative for an association with retromer CSC subcomplex. MAP1LC3A and VPS29 compete for binding to TBC1D5. Interacts with AP2M1; indicative for an association with the AP2 complex. Interacts with ULK1 and ATG13 (phosphorylated); indicative for an association with the activated ULK1-ATG13-FIP200 complex. Interacts with ATG9A; the interactions seems to be restricted to the AP2-clathrin-associated fraction of ATG9A.

It localises to the endosome membrane. The protein resides in the cytoplasmic vesicle. Its subcellular location is the autophagosome. Its function is as follows. May act as a GTPase-activating protein (GAP) for Rab family protein(s). May act as a GAP for RAB7A. Can displace RAB7A and retromer CSC subcomplex from the endosomal membrane to the cytosol; at least retromer displacement seems to require its catalytic activity. Required for retrograde transport of cargo proteins from endosomes to the trans-Golgi network (TGN); the function seems to require its catalytic activity. Involved in regulation of autophagy. May act as a molecular switch between endosomal and autophagosomal transport and is involved in reprogramming vesicle trafficking upon autophagy induction. Involved in the trafficking of ATG9A upon activation of autophagy. May regulate the recruitment of ATG9A-AP2-containing vesicles to autophagic membranes. This is TBC1 domain family member 5 (TBC1D5) from Homo sapiens (Human).